A 499-amino-acid polypeptide reads, in one-letter code: Aspartyl/glutamyl-tRNA(Asn/Gln) amidotransferase subunit B (499 aa).

This sequence belongs to the GatB/GatE family. GatB subfamily. In terms of assembly, heterotrimer of A, B and C subunits.

The enzyme catalyses L-glutamyl-tRNA(Gln) + L-glutamine + ATP + H2O = L-glutaminyl-tRNA(Gln) + L-glutamate + ADP + phosphate + H(+). The catalysed reaction is L-aspartyl-tRNA(Asn) + L-glutamine + ATP + H2O = L-asparaginyl-tRNA(Asn) + L-glutamate + ADP + phosphate + 2 H(+). Allows the formation of correctly charged Asn-tRNA(Asn) or Gln-tRNA(Gln) through the transamidation of misacylated Asp-tRNA(Asn) or Glu-tRNA(Gln) in organisms which lack either or both of asparaginyl-tRNA or glutaminyl-tRNA synthetases. The reaction takes place in the presence of glutamine and ATP through an activated phospho-Asp-tRNA(Asn) or phospho-Glu-tRNA(Gln). The polypeptide is Aspartyl/glutamyl-tRNA(Asn/Gln) amidotransferase subunit B (Salinispora arenicola (strain CNS-205)).